A 311-amino-acid polypeptide reads, in one-letter code: GTPase Era (311 aa).

One can recognise an Era-type G domain in the interval 18–185 (RSGFVALIGA…AKYLAESVPN (168 aa)). A G1 region spans residues 26 to 33 (GAPNAGKS). Position 26 to 33 (26 to 33 (GAPNAGKS)) interacts with GTP. Residues 52-56 (QTTRA) are G2. The segment at 73 to 76 (DTPG) is G3. Residues 73–77 (DTPGI) and 135–138 (NKVD) each bind GTP. Residues 135–138 (NKVD) form a G4 region. A G5 region spans residues 164–166 (ISA). The 78-residue stretch at 216-293 (LHEELPYAST…HLFLFVKVRE (78 aa)) folds into the KH type-2 domain.

It belongs to the TRAFAC class TrmE-Era-EngA-EngB-Septin-like GTPase superfamily. Era GTPase family. As to quaternary structure, monomer.

The protein resides in the cytoplasm. The protein localises to the cell inner membrane. Functionally, an essential GTPase that binds both GDP and GTP, with rapid nucleotide exchange. Plays a role in 16S rRNA processing and 30S ribosomal subunit biogenesis and possibly also in cell cycle regulation and energy metabolism. This Brucella suis biovar 1 (strain 1330) protein is GTPase Era.